The primary structure comprises 143 residues: MEYNNMMELKFLSKSQNESFARTVVAAFAAQLDPTIEEIADIKTAVSEAVTNCIIHAYENKIGIITIRAFILDNKITIEVIDEGKGIEDVEKAMQPLFTTRLEEERAGMGFTVMQTFMDELEVESTPGKGTLVRMTKYIGRNR.

The protein belongs to the anti-sigma-factor family.

The catalysed reaction is L-seryl-[protein] + ATP = O-phospho-L-seryl-[protein] + ADP + H(+). It catalyses the reaction L-threonyl-[protein] + ATP = O-phospho-L-threonyl-[protein] + ADP + H(+). In terms of biological role, binds to sigma F and blocks its ability to form an RNA polymerase holoenzyme (E-sigma F). Phosphorylates SpoIIAA on a serine residue. This phosphorylation may enable SpoIIAA to act as an anti-anti-sigma factor that counteracts SpoIIAB and thus releases sigma F from inhibition. The protein is Anti-sigma F factor of Caldanaerobacter subterraneus subsp. tengcongensis (strain DSM 15242 / JCM 11007 / NBRC 100824 / MB4) (Thermoanaerobacter tengcongensis).